We begin with the raw amino-acid sequence, 621 residues long: tRNA uridine 5-carboxymethylaminomethyl modification enzyme MnmG (621 aa).

An FAD-binding site is contributed by 8-13; it reads GAGHAG. 269–283 is an NAD(+) binding site; that stretch reads GPRYCPSVEDKIFRF.

The protein belongs to the MnmG family. In terms of assembly, homodimer. Heterotetramer of two MnmE and two MnmG subunits. It depends on FAD as a cofactor.

The protein resides in the cytoplasm. NAD-binding protein involved in the addition of a carboxymethylaminomethyl (cmnm) group at the wobble position (U34) of certain tRNAs, forming tRNA-cmnm(5)s(2)U34. The chain is tRNA uridine 5-carboxymethylaminomethyl modification enzyme MnmG from Chlorobium chlorochromatii (strain CaD3).